The following is a 131-amino-acid chain: Small ribosomal subunit protein bS6 (131 aa).

Positions E98–E131 are disordered. The segment covering R104–E131 has biased composition (basic and acidic residues).

The protein belongs to the bacterial ribosomal protein bS6 family.

Its function is as follows. Binds together with bS18 to 16S ribosomal RNA. The chain is Small ribosomal subunit protein bS6 from Shewanella putrefaciens (strain CN-32 / ATCC BAA-453).